The chain runs to 235 residues: MNIRNARPEDLMNMQHCNLLCLPENYQMKYYFYHGLSWPQLSYIAEDENGKIVGYVLAKMEEDPDDVPHGHITSLAVKRSHRRLGLAQKLMDQASRAMIENFNAKYVSLHVRKSNRAALHLYSNTLNFQISEVEPKYYADGEDAYAMKRDLTQMADELRRHLELKEKGKHMVLAALENKAENKGNVLLSSGEACREEKGLAAEDSGGDSKDLSEVSETTESTDVKDSSEASDSAS.

The residue at position 1 (M1) is an N-acetylmethionine. Residues 1–58 form an interaction with NAA15 region; it reads MNIRNARPEDLMNMQHCNLLCLPENYQMKYYFYHGLSWPQLSYIAEDENGKIVGYVLA. One can recognise an N-acetyltransferase domain in the interval 1–152; sequence MNIRNARPED…DAYAMKRDLT (152 aa). N6-acetyllysine; by autocatalysis is present on K136. Residues 196–213 show a composition bias toward basic and acidic residues; sequence EEKGLAAEDSGGDSKDLS. Residues 196 to 235 are disordered; the sequence is EEKGLAAEDSGGDSKDLSEVSETTESTDVKDSSEASDSAS. S205 is modified (phosphoserine). A Phosphoserine; by IKKB modification is found at S209. A phosphoserine mark is found at S213 and S216.

This sequence belongs to the acetyltransferase family. ARD1 subfamily. Component of the N-terminal acetyltransferase A complex (also called the NatA complex) composed of NAA10 and NAA15. Interacts with NAA15. Component of the N-terminal acetyltransferase A (NatA)/HYPK complex at least composed of NAA10, NAA15 and HYPK, which has N-terminal acetyltransferase activity. In complex with NAA15, interacts with HYPK. Component of the N-terminal acetyltransferase E (NatE) complex at least composed of NAA10, NAA15 and NAA50. Within the complex interacts with NAA15; the interaction is required for binding to NAAT50. Interacts with NAAT50. The interaction of the NatA complex with NAA50 reduces the acetylation activity of the NatA complex. Component of the N-terminal acetyltransferase E (NatE)/HYPK complex at least composed of NAA10, NAA15, NAA50 and HYPK. In complex with NAA15, interacts with HYPK; the interaction with HYPK reduces the capacity of the NatA complex to interact with NAA50. Interacts with HIF1A (via its ODD domain); the interaction increases HIF1A protein stability during normoxia, an down-regulates it when induced by hypoxia. Interacts with the ribosome. Binds to MYLK. Interacts with NAA16. Interacts (via its C-terminal domain) with TSC2, leading to its acetylation. Interacts with IKBKB. Interacts with HSPA1A and HSPA1B leading to its acetylation. Post-translationally, cleaved by caspases during apoptosis. Phosphorylation by IKBKB/IKKB at Ser-209 destabilises NAA10 and promotes its proteasome-mediated degradation. In terms of processing, autoacetylated at Lys-136 which stimulates its catalytic activity. Ubiquitous.

The protein resides in the cytoplasm. It is found in the nucleus. It carries out the reaction N-terminal glycyl-[protein] + acetyl-CoA = N-terminal N(alpha)-acetylglycyl-[protein] + CoA + H(+). The catalysed reaction is N-terminal L-alanyl-[protein] + acetyl-CoA = N-terminal N(alpha)-acetyl-L-alanyl-[protein] + CoA + H(+). It catalyses the reaction N-terminal L-seryl-[protein] + acetyl-CoA = N-terminal N(alpha)-acetyl-L-seryl-[protein] + CoA + H(+). The enzyme catalyses N-terminal L-valyl-[protein] + acetyl-CoA = N-terminal N(alpha)-acetyl-L-valyl-[protein] + CoA + H(+). It carries out the reaction N-terminal L-cysteinyl-[protein] + acetyl-CoA = N-terminal N(alpha)-acetyl-L-cysteinyl-[protein] + CoA + H(+). The catalysed reaction is N-terminal L-threonyl-[protein] + acetyl-CoA = N-terminal N(alpha)-acetyl-L-threonyl-[protein] + CoA + H(+). Catalytic subunit of the N-terminal acetyltransferase A (NatA) complex which displays alpha (N-terminal) acetyltransferase activity. Acetylates amino termini that are devoid of initiator methionine. The alpha (N-terminal) acetyltransferase activity may be important for vascular, hematopoietic and neuronal growth and development. Without NAA15, displays epsilon (internal) acetyltransferase activity towards HIF1A, thereby promoting its degradation. Represses MYLK kinase activity by acetylation, and thus represses tumor cell migration. Acetylates, and stabilizes TSC2, thereby repressing mTOR activity and suppressing cancer development. Acetylates HSPA1A and HSPA1B at 'Lys-77' which enhances its chaperone activity and leads to preferential binding to co-chaperone HOPX. Acetylates HIST1H4A. Acts as a negative regulator of sister chromatid cohesion during mitosis. In Mus musculus (Mouse), this protein is N-alpha-acetyltransferase 10 (Naa10).